The primary structure comprises 206 residues: Large ribosomal subunit protein uL4 (206 aa).

A disordered region spans residues 43–78 (ARSGNRAQKDREQVKHTTKKPWRQKGTGRARAGMSS). The span at 58–70 (HTTKKPWRQKGTG) shows a compositional bias: basic residues.

This sequence belongs to the universal ribosomal protein uL4 family. As to quaternary structure, part of the 50S ribosomal subunit.

One of the primary rRNA binding proteins, this protein initially binds near the 5'-end of the 23S rRNA. It is important during the early stages of 50S assembly. It makes multiple contacts with different domains of the 23S rRNA in the assembled 50S subunit and ribosome. Its function is as follows. Forms part of the polypeptide exit tunnel. This chain is Large ribosomal subunit protein uL4, found in Polynucleobacter necessarius subsp. necessarius (strain STIR1).